The following is a 507-amino-acid chain: Dihydrolipoyl dehydrogenase 2, mitochondrial (507 aa).

Residues 1 to 36 (MAMASLARRKAYFLTRNISNSPTDAFRFSFSLTRGF) constitute a mitochondrion transit peptide. FAD is bound by residues 73 to 82 (EKRGALGGTC), Lys91, Gly155, and 184 to 186 (TGS). The cysteines at positions 82 and 87 are disulfide-linked. NAD(+) is bound by residues 221–228 (GAGYIGLE), Glu244, Val278, and Gly313. FAD-binding positions include Asp354 and 360-363 (MLAH). His486 (proton acceptor) is an active-site residue.

Belongs to the class-I pyridine nucleotide-disulfide oxidoreductase family. Homodimer. Part of both the glycine cleavage system composed of four proteins: P, T, L and H and of the pyruvate dehydrogenase complex containing multiple copies of three enzymatic components: pyruvate dehydrogenase (E1), dihydrolipoamide acetyltransferase (E2) and lipoamide dehydrogenase (E3). FAD is required as a cofactor. S-nytrosylated at unknown positions. In terms of tissue distribution, preferentially expressed in roots, flowers and siliques and at a lower level in stems and leaves.

Its subcellular location is the mitochondrion matrix. It carries out the reaction N(6)-[(R)-dihydrolipoyl]-L-lysyl-[protein] + NAD(+) = N(6)-[(R)-lipoyl]-L-lysyl-[protein] + NADH + H(+). Lipoamide dehydrogenase is a component of the glycine decarboxylase (GDC) or glycine cleavage system as well as of the alpha-ketoacid dehydrogenase complexes. LPD1 is probably the protein most often associated with the glycine decarboxylase complex while LPD2 is probably incorporated into alpha-ketoacid dehydrogenase complexes. This chain is Dihydrolipoyl dehydrogenase 2, mitochondrial (LPD2), found in Arabidopsis thaliana (Mouse-ear cress).